The primary structure comprises 148 residues: MASKRILKELKDLQKDPPTSCSAGPVAEDMFHWQATIMGPTDSPYAGGVFLVSIHFPPDYPFKPPKVAFRTKVFHPNINSNGSICLDILKEQWSPALTISKVLLSICSLLTDPNPDDPLVPEIAHMYKTDRAKYETTARSWTQKYAMG.

The 147-residue stretch at 1–147 folds into the UBC core domain; the sequence is MASKRILKEL…ARSWTQKYAM (147 aa). Cys85 functions as the Glycyl thioester intermediate in the catalytic mechanism.

This sequence belongs to the ubiquitin-conjugating enzyme family.

The catalysed reaction is S-ubiquitinyl-[E1 ubiquitin-activating enzyme]-L-cysteine + [E2 ubiquitin-conjugating enzyme]-L-cysteine = [E1 ubiquitin-activating enzyme]-L-cysteine + S-ubiquitinyl-[E2 ubiquitin-conjugating enzyme]-L-cysteine.. Its pathway is protein modification; protein ubiquitination. Functionally, catalyzes the covalent attachment of ubiquitin to other proteins. Mediates the selective degradation of short-lived and abnormal proteins. This chain is Ubiquitin-conjugating enzyme E2-17 kDa, found in Solanum lycopersicum (Tomato).